Consider the following 317-residue polypeptide: Acetyl-coenzyme A carboxylase carboxyl transferase subunit alpha (317 aa).

Residues 39–293 (RLETKAREAL…GDAIADALSQ (255 aa)) form the CoA carboxyltransferase C-terminal domain.

The protein belongs to the AccA family. Acetyl-CoA carboxylase is a heterohexamer composed of biotin carboxyl carrier protein (AccB), biotin carboxylase (AccC) and two subunits each of ACCase subunit alpha (AccA) and ACCase subunit beta (AccD).

It is found in the cytoplasm. The enzyme catalyses N(6)-carboxybiotinyl-L-lysyl-[protein] + acetyl-CoA = N(6)-biotinyl-L-lysyl-[protein] + malonyl-CoA. It participates in lipid metabolism; malonyl-CoA biosynthesis; malonyl-CoA from acetyl-CoA: step 1/1. Functionally, component of the acetyl coenzyme A carboxylase (ACC) complex. First, biotin carboxylase catalyzes the carboxylation of biotin on its carrier protein (BCCP) and then the CO(2) group is transferred by the carboxyltransferase to acetyl-CoA to form malonyl-CoA. This chain is Acetyl-coenzyme A carboxylase carboxyl transferase subunit alpha, found in Xanthobacter autotrophicus (strain ATCC BAA-1158 / Py2).